The chain runs to 440 residues: L-seryl-tRNA(Sec) selenium transferase (440 aa).

Lys-282 is modified (N6-(pyridoxal phosphate)lysine).

This sequence belongs to the SelA family. Pyridoxal 5'-phosphate is required as a cofactor.

It is found in the cytoplasm. It catalyses the reaction L-seryl-tRNA(Sec) + selenophosphate + H(+) = L-selenocysteinyl-tRNA(Sec) + phosphate. It participates in aminoacyl-tRNA biosynthesis; selenocysteinyl-tRNA(Sec) biosynthesis; selenocysteinyl-tRNA(Sec) from L-seryl-tRNA(Sec) (bacterial route): step 1/1. Functionally, converts seryl-tRNA(Sec) to selenocysteinyl-tRNA(Sec) required for selenoprotein biosynthesis. The polypeptide is L-seryl-tRNA(Sec) selenium transferase (Campylobacter jejuni (strain RM1221)).